Here is a 58-residue protein sequence, read N- to C-terminus: Preprotein translocase subunit SecG (58 aa).

Over 1–32 (MAQKKKSSGSGLMSSAGLMTYYDADKKAIHVQ) the chain is Cytoplasmic. The helical transmembrane segment at 33–54 (PKTVFIFGAICGIVILAFSAGF) threads the bilayer. The Extracellular portion of the chain corresponds to 55–58 (GLWP).

This sequence belongs to the SEC61-beta family. As to quaternary structure, component of the protein translocase complex. Heterotrimer consisting of alpha (SecY), beta (SecG) and gamma (SecE) subunits. Can form oligomers of the heterotrimer.

It localises to the cell membrane. Its function is as follows. Involved in protein export. The function of the beta subunit is unknown, but it may be involved in stabilization of the trimeric complex. In Methanococcoides burtonii (strain DSM 6242 / NBRC 107633 / OCM 468 / ACE-M), this protein is Preprotein translocase subunit SecG.